The chain runs to 390 residues: Manganese peroxidase 2 (390 aa).

The N-terminal stretch at 1–23 is a signal peptide; it reads MAFNFAAILAFVSLAAVTSAAPS. Disulfide bonds link cysteine 27–cysteine 39, cysteine 38–cysteine 313, cysteine 57–cysteine 141, cysteine 277–cysteine 343, and cysteine 365–cysteine 372. The Mn(2+) site is built by glutamate 59 and glutamate 63. The Proton acceptor role is filled by histidine 70. Residues aspartate 71, glycine 86, aspartate 88, and serine 90 each contribute to the Ca(2+) site. Residue asparagine 155 is glycosylated (N-linked (GlcNAc...) asparagine). Position 197 (histidine 197) interacts with heme b. Residue serine 198 coordinates Ca(2+). A Mn(2+)-binding site is contributed by aspartate 203. Positions 215, 217, and 222 each coordinate Ca(2+). N-linked (GlcNAc...) asparagine glycosylation is present at asparagine 241.

Belongs to the peroxidase family. Ligninase subfamily. The cofactor is heme b. It depends on Ca(2+) as a cofactor.

The protein localises to the secreted. It catalyses the reaction 2 Mn(2+) + H2O2 + 2 H(+) = 2 Mn(3+) + 2 H2O. In terms of biological role, catalyzes the oxidation of Mn(2+) to Mn(3+). The latter, acting as a diffusible redox mediator, is capable of oxidizing a variety of lignin compounds. The chain is Manganese peroxidase 2 (mnp2) from Phlebia radiata (White-rot fungus).